A 66-amino-acid chain; its full sequence is Large ribosomal subunit protein bL31 (66 aa).

4 residues coordinate Zn(2+): Cys-16, Cys-18, Cys-36, and Cys-39.

The protein belongs to the bacterial ribosomal protein bL31 family. Type A subfamily. As to quaternary structure, part of the 50S ribosomal subunit. It depends on Zn(2+) as a cofactor.

Its function is as follows. Binds the 23S rRNA. In Anoxybacillus flavithermus (strain DSM 21510 / WK1), this protein is Large ribosomal subunit protein bL31.